A 644-amino-acid chain; its full sequence is MFQDNPLLAQLKQQLHSQTPRAEGVVKATEKGFGFLEVDAQKSYFIPPPQMKKVMHGDRIVAVIHTEKERESAEPEELIEPFLTRFVGKVQGKNDRLSIVPDHPLLKDAIPCRAARGVQHEFKEGDWAVAEMRRHPLKGDRSFYADLTQYITFADDHFVPWWVTLARHNLEKEAPNGVATEMLDEGLERQDLTALNFVTIDSASTEDMDDALYAEELADGRLQLTVAIADPTAWIAEGSKLDNTAKIRAFTNYLPGFNIPMLPRELSDDLCSLRANEVRPALACRMIIAADGTIDDDIAFFAATIESKAKLAYDNVSDWLENNGTWQPDNEGIAQQIRLLHRICLSRSEWRHHHALVFKDRPDYRFVLGEKGEVLDIVAEPRRIANRIVEESMIAANLCAARVLRDKLGFGIYNVHTGFDPANADALAALLKTHGLHVDAEEVLTLEGFCKLRRELDAQPSGFLDSRIRRFQSFAEISTEPGPHFGLGLEAYATWTSPIRKYGDMINHRLLKAVIKGEAIARPQEDITQQMAERRRLNRMAERDVGDWLYARFLNDKAGTNTRFAAEIIDVSRGGMRVRLVDNGAIAFIPAPFLHAVRDELVCSQENGTVQIKGETVYKVTDVIDVTIAEVRMETRSIIARPAA.

Residues 189 to 516 (RQDLTALNFV…NHRLLKAVIK (328 aa)) enclose the RNB domain. The S1 motif domain occupies 561–643 (NTRFAAEIID…ETRSIIARPA (83 aa)).

It belongs to the RNR ribonuclease family. RNase II subfamily.

It localises to the cytoplasm. It catalyses the reaction Exonucleolytic cleavage in the 3'- to 5'-direction to yield nucleoside 5'-phosphates.. Its function is as follows. Involved in mRNA degradation. Hydrolyzes single-stranded polyribonucleotides processively in the 3' to 5' direction. The protein is Exoribonuclease 2 of Salmonella paratyphi B (strain ATCC BAA-1250 / SPB7).